A 217-amino-acid chain; its full sequence is 3-demethoxyubiquinol 3-hydroxylase (217 aa).

Fe cation is bound by residues Glu66, Glu96, His99, Glu148, Glu180, and His183.

This sequence belongs to the COQ7 family. The cofactor is Fe cation.

The protein localises to the cell membrane. It catalyses the reaction a 5-methoxy-2-methyl-3-(all-trans-polyprenyl)benzene-1,4-diol + AH2 + O2 = a 3-demethylubiquinol + A + H2O. It participates in cofactor biosynthesis; ubiquinone biosynthesis. Its function is as follows. Catalyzes the hydroxylation of 2-nonaprenyl-3-methyl-6-methoxy-1,4-benzoquinol during ubiquinone biosynthesis. In Xylella fastidiosa (strain Temecula1 / ATCC 700964), this protein is 3-demethoxyubiquinol 3-hydroxylase.